A 668-amino-acid chain; its full sequence is WD repeat-containing protein 48 homolog (668 aa).

8 WD repeats span residues 26 to 65, 71 to 110, 113 to 152, 164 to 203, 206 to 245, 248 to 287, 290 to 329, and 350 to 389; these read QHRN…SEKY, HHND…CMST, THRD…ALTA, GSKD…RRMK, GHTE…CVQT, VHKE…NKTL, EEQA…RCTL, and KGGA…KKEQ. A disordered region spans residues 592 to 616; it reads ETTPSGGNANNSLQNSQSDANSEGS.

It belongs to the WD repeat WDR48 family. As to quaternary structure, catalytic component of the Usp12-46 deubiquitylase complex consisting of Usp12-46, Wdr20 and Uaf1; regulatory subunit that, together wtih Wdr20, stabilizes Usp12-46. The Usp12-46 deubiquitylase complex associates with arr/arrow; the interaction leads to deubiquitination and stabilization of arr/arrow.

Regulatory component of the Usp12-46 deubiquitylase complex. activates deubiquitination by increasing the catalytic turnover without increasing the affinity of deubiquitinating enzymes for the substrate. The complex deubiquitylates the wg/wingless-signaling receptor arr/arrow, which stabilizes the receptor and increases its concentration at the cell surface; this enhances the sensitivity of cells to wg/wingless-signal stimulation. This increases the amplitude and spatial range of the signaling response to the wg/wingless morphogen gradient, facilitating the precise concentration-dependent regulation of its target genes. Together with Wdr20 and Usp12-46 required for wg/wingless-mediated signaling in the wing imaginal disc and for wg/wingless-dependent regulation of intestinal stem cell proliferation. The polypeptide is WD repeat-containing protein 48 homolog (Drosophila melanogaster (Fruit fly)).